We begin with the raw amino-acid sequence, 764 residues long: Ribosomal protein S6 kinase alpha-6 (764 aa).

The segment at 1-24 (MLPFAPVEDPWDQEDMEVFGSTSS) is disordered. The Protein kinase 1 domain maps to 93 to 350 (FDLLKVLGQG…VEEVKRHAFF (258 aa)). ATP contacts are provided by residues 99–107 (LGQGSFGKV) and Lys-125. The Proton acceptor role is filled by Asp-218. A phosphoserine mark is found at Ser-252, Ser-392, and Ser-409. The AGC-kinase C-terminal domain occupies 351–420 (ASIDWNKLYK…VATSIAEEYK (70 aa)). The Protein kinase 2 domain occupies 446-706 (YELKEDIGIG…VLKHPWITQR (261 aa)). Residues 452 to 460 (IGIGSYSVC) and Lys-475 contribute to the ATP site. Residue Asp-563 is the Proton acceptor of the active site. Thr-601 carries the phosphothreonine modification.

This sequence belongs to the protein kinase superfamily. AGC Ser/Thr protein kinase family. S6 kinase subfamily. In terms of assembly, forms a complex with MAPK3/ERK1 but not with MAPK9 or MAPK14 in serum-starved cells. Requires Mg(2+) as cofactor. Post-translationally, phosphorylated at Ser-252, Ser-392, and Ser-409 in serum-starved cells.

Its subcellular location is the cytoplasm. The protein resides in the cytosol. The protein localises to the nucleus. It catalyses the reaction L-seryl-[protein] + ATP = O-phospho-L-seryl-[protein] + ADP + H(+). It carries out the reaction L-threonyl-[protein] + ATP = O-phospho-L-threonyl-[protein] + ADP + H(+). Constitutively activated by phosphorylation at Ser-252, Ser-392, and Ser-409 in serum-starved cells. Does not require growth factor stimulation for significant kinase activity. In terms of biological role, constitutively active serine/threonine-protein kinase that exhibits growth-factor-independent kinase activity and that may participate in p53/TP53-dependent cell growth arrest signaling and play an inhibitory role during embryogenesis. This Mus musculus (Mouse) protein is Ribosomal protein S6 kinase alpha-6 (Rps6ka6).